An 851-amino-acid polypeptide reads, in one-letter code: DNA mismatch repair protein MutS (851 aa).

602–609 provides a ligand contact to ATP; it reads GPNMSGKS.

Belongs to the DNA mismatch repair MutS family.

Its function is as follows. This protein is involved in the repair of mismatches in DNA. It is possible that it carries out the mismatch recognition step. This protein has a weak ATPase activity. The polypeptide is DNA mismatch repair protein MutS (Streptococcus pyogenes serotype M4 (strain MGAS10750)).